Consider the following 348-residue polypeptide: Phosphoribosylformylglycinamidine cyclo-ligase (348 aa).

This sequence belongs to the AIR synthase family.

It is found in the cytoplasm. It carries out the reaction 2-formamido-N(1)-(5-O-phospho-beta-D-ribosyl)acetamidine + ATP = 5-amino-1-(5-phospho-beta-D-ribosyl)imidazole + ADP + phosphate + H(+). It participates in purine metabolism; IMP biosynthesis via de novo pathway; 5-amino-1-(5-phospho-D-ribosyl)imidazole from N(2)-formyl-N(1)-(5-phospho-D-ribosyl)glycinamide: step 2/2. This Geotalea uraniireducens (strain Rf4) (Geobacter uraniireducens) protein is Phosphoribosylformylglycinamidine cyclo-ligase.